The following is a 312-amino-acid chain: Zinc transporter ZitB (312 aa).

Helical transmembrane passes span 16–36, 40–60, 81–101, 117–137, 153–173, and 177–197; these read LLIA…GGWL, LALL…FIAL, LTTL…ILIV, TPML…FWIL, LHVL…IVIL, and WTPI…RNAW.

This sequence belongs to the cation diffusion facilitator (CDF) transporter (TC 2.A.4) family. SLC30A subfamily.

It is found in the cell inner membrane. Its function is as follows. Involved in zinc efflux across the cytoplasmic membrane, thus reducing zinc accumulation in the cytoplasm and rendering bacteria more resistant to zinc. It may contribute to zinc homeostasis at low concentrations of zinc. The chain is Zinc transporter ZitB from Yersinia pseudotuberculosis serotype I (strain IP32953).